The following is a 79-amino-acid chain: Acyl carrier protein (79 aa).

The Carrier domain occupies 1–76; the sequence is MEVFEEVRDV…DVVTYIENLN (76 aa). An O-(pantetheine 4'-phosphoryl)serine modification is found at serine 36.

This sequence belongs to the acyl carrier protein (ACP) family. Post-translationally, 4'-phosphopantetheine is transferred from CoA to a specific serine of apo-ACP by AcpS. This modification is essential for activity because fatty acids are bound in thioester linkage to the sulfhydryl of the prosthetic group.

It localises to the cytoplasm. It functions in the pathway lipid metabolism; fatty acid biosynthesis. In terms of biological role, carrier of the growing fatty acid chain in fatty acid biosynthesis. The polypeptide is Acyl carrier protein (Campylobacter hominis (strain ATCC BAA-381 / DSM 21671 / CCUG 45161 / LMG 19568 / NCTC 13146 / CH001A)).